The following is a 426-amino-acid chain: Growth-regulating factor 9 (426 aa).

The QLQ domain occupies 92–127 (PFTPSQWMELEHQALIYKYLNAKAPIPSSLLISISK). The WRC domain maps to 151–195 (DPEPGRCRRTDGKKWRCSKEAMADHKYCERHINRNRHRSRKPVEN). 2 consecutive short sequence motifs (bipartite nuclear localization signal) follow at residues 156–166 (RCRRTDGKKWR) and 184–191 (RNRHRSRK). The disordered stretch occupies residues 184-222 (RNRHRSRKPVENQSRKTVKETPCAGSLPSSVGQGSFKKA). The segment covering 191 to 202 (KPVENQSRKTVK) has biased composition (basic and acidic residues).

It belongs to the GRF family.

It is found in the nucleus. Its function is as follows. Transcription activator that plays a regulatory role in gibberellin-induced stem elongation. The protein is Growth-regulating factor 9 (GRF9) of Oryza sativa subsp. japonica (Rice).